Reading from the N-terminus, the 194-residue chain is Large ribosomal subunit protein eL15 (194 aa).

The segment at 165 to 194 (AGKKGRGLRNKGKGAEKVRPSIRANEGKGK) is disordered. Residues 167–176 (KKGRGLRNKG) show a composition bias toward basic residues. Residues 177-194 (KGAEKVRPSIRANEGKGK) are compositionally biased toward basic and acidic residues.

This sequence belongs to the eukaryotic ribosomal protein eL15 family. As to quaternary structure, part of the 50S ribosomal subunit.

This Pyrococcus furiosus (strain ATCC 43587 / DSM 3638 / JCM 8422 / Vc1) protein is Large ribosomal subunit protein eL15.